A 1260-amino-acid polypeptide reads, in one-letter code: Neural cell adhesion molecule L1 (1260 aa).

A signal peptide spans 1-19; the sequence is MVVMLRYVWPLLLCSPCLL. Residues 20–1123 are Extracellular-facing; sequence IQIPDEYKGH…VSTTGSFASE (1104 aa). 6 consecutive Ig-like C2-type domains span residues 35-130, 138-225, 239-327, 332-419, 424-506, and 517-600; these read PVIT…IQLV, PKET…EPID, PRLL…YYVT, PYWL…AYIY, PARI…NNVT, and TQIT…DEVE. Disulfide bonds link Cys57-Cys113 and Cys157-Cys208. Residues Asn100, Asn202, Asn246, and Asn293 are each glycosylated (N-linked (GlcNAc...) asparagine). Intrachain disulfides connect Cys263–Cys311 and Cys353–Cys403. Asn432, Asn478, Asn489, and Asn504 each carry an N-linked (GlcNAc...) asparagine glycan. A disulfide bond links Cys447 and Cys496. Cys538 and Cys590 are oxidised to a cystine. 2 short sequence motifs (cell attachment site) span residues 553–555 and 562–564; these read RGD. Asn587 and Asn670 each carry an N-linked (GlcNAc...) asparagine glycan. 5 Fibronectin type-III domains span residues 613–711, 716–809, 811–916, 919–1015, and 1014–1112; these read PVPH…TPEA, NPVD…SGED, PQVS…PEGV, HPEA…MALF, and LFGK…TGPV. Positions 697 to 724 are disordered; that stretch reads GEPSPVSESVVTPEAAPEKNPVDVRGEG. The segment covering 712 to 724 has biased composition (basic and acidic residues); sequence APEKNPVDVRGEG. Residues Asn725, Asn776, Asn824, Asn848, Asn875, Asn968, Asn978, Asn1022, Asn1030, Asn1073, and Asn1107 are each glycosylated (N-linked (GlcNAc...) asparagine). The helical transmembrane segment at 1124 to 1146 threads the bilayer; that stretch reads GWFIAFVSAIILLLLILLILCFI. Residues 1147 to 1260 are Cytoplasmic-facing; the sequence is KRSKGGKYSV…SPINPAVALE (114 aa). Ser1166, Ser1181, Ser1184, Ser1197, Ser1246, Ser1247, and Ser1251 each carry phosphoserine. Disordered stretches follow at residues 1183-1210 and 1229-1260; these read ESDNEEKAFGSSQPSLNGDIKPLGSDDS and IGQYSGKKEKEAAGGNDSSGATSPINPAVALE. A compositionally biased stretch (polar residues) spans 1244–1253; sequence NDSSGATSPI.

It belongs to the immunoglobulin superfamily. L1/neurofascin/NgCAM family. Interacts with SHTN1; the interaction occurs in axonal growth cones. Interacts with isoform 2 of BSG. In terms of tissue distribution, expressed in the brain, including in the molecular layer of the cerebellar cortex, the fiber-rich layers of the hippocampus (alveus, and strata lacunosum moleculare, radiatum, and oriens), the nerve fiber layer and the inner and outer plexiform layers of the retina, and in the molecular layer of the olfactory bulb (at protein level).

The protein localises to the cell membrane. The protein resides in the cell projection. It localises to the growth cone. Its function is as follows. Neural cell adhesion molecule involved in the dynamics of cell adhesion and in the generation of transmembrane signals at tyrosine kinase receptors. During brain development, critical in multiple processes, including neuronal migration, axonal growth and fasciculation, and synaptogenesis. In the mature brain, plays a role in the dynamics of neuronal structure and function, including synaptic plasticity. The polypeptide is Neural cell adhesion molecule L1 (L1cam) (Mus musculus (Mouse)).